A 176-amino-acid polypeptide reads, in one-letter code: Transcription factor E (176 aa).

The region spanning 8-90 (NDPVIQKYLH…LWTFHYENIP (83 aa)) is the HTH TFE/IIEalpha-type domain.

Belongs to the TFE family. In terms of assembly, monomer. Interaction with RNA polymerase subunits RpoF and RpoE is necessary for Tfe stimulatory transcription activity. Able to interact with Tbp and RNA polymerase in the absence of DNA promoter. Interacts both with the preinitiation and elongation complexes.

Its function is as follows. Transcription factor that plays a role in the activation of archaeal genes transcribed by RNA polymerase. Facilitates transcription initiation by enhancing TATA-box recognition by TATA-box-binding protein (Tbp), and transcription factor B (Tfb) and RNA polymerase recruitment. Not absolutely required for transcription in vitro, but particularly important in cases where Tbp or Tfb function is not optimal. It dynamically alters the nucleic acid-binding properties of RNA polymerases by stabilizing the initiation complex and destabilizing elongation complexes. Seems to translocate with the RNA polymerase following initiation and acts by binding to the non template strand of the transcription bubble in elongation complexes. In Haloquadratum walsbyi (strain DSM 16790 / HBSQ001), this protein is Transcription factor E.